A 201-amino-acid polypeptide reads, in one-letter code: Recombination protein RecR (201 aa).

A C4-type zinc finger spans residues 60–75; sequence CSCCGNVDTSDPCTIC. The region spanning 83-178 is the Toprim domain; it reads ATLIVVEDVS…RVTRLAHGVP (96 aa).

Belongs to the RecR family.

Functionally, may play a role in DNA repair. It seems to be involved in an RecBC-independent recombinational process of DNA repair. It may act with RecF and RecO. The protein is Recombination protein RecR of Brucella abortus biovar 1 (strain 9-941).